The chain runs to 145 residues: Putative pre-16S rRNA nuclease (145 aa).

Belongs to the YqgF nuclease family.

It is found in the cytoplasm. Could be a nuclease involved in processing of the 5'-end of pre-16S rRNA. This is Putative pre-16S rRNA nuclease from Thiobacillus denitrificans (strain ATCC 25259 / T1).